The following is a 393-amino-acid chain: NAD(P)H-quinone oxidoreductase subunit H, chloroplastic (393 aa).

This sequence belongs to the complex I 49 kDa subunit family. As to quaternary structure, NDH is composed of at least 16 different subunits, 5 of which are encoded in the nucleus. Interacts with the chaperonin CNP60B4 subunit.

It is found in the plastid. It localises to the chloroplast thylakoid membrane. The catalysed reaction is a plastoquinone + NADH + (n+1) H(+)(in) = a plastoquinol + NAD(+) + n H(+)(out). It catalyses the reaction a plastoquinone + NADPH + (n+1) H(+)(in) = a plastoquinol + NADP(+) + n H(+)(out). In terms of biological role, NDH shuttles electrons from NAD(P)H:plastoquinone, via FMN and iron-sulfur (Fe-S) centers, to quinones in the photosynthetic chain and possibly in a chloroplast respiratory chain. The immediate electron acceptor for the enzyme in this species is believed to be plastoquinone. Couples the redox reaction to proton translocation, and thus conserves the redox energy in a proton gradient. In Arabidopsis thaliana (Mouse-ear cress), this protein is NAD(P)H-quinone oxidoreductase subunit H, chloroplastic.